The chain runs to 226 residues: Uracil-DNA glycosylase (226 aa).

The Proton acceptor role is filled by aspartate 64.

This sequence belongs to the uracil-DNA glycosylase (UDG) superfamily. UNG family.

The protein localises to the cytoplasm. It catalyses the reaction Hydrolyzes single-stranded DNA or mismatched double-stranded DNA and polynucleotides, releasing free uracil.. Functionally, excises uracil residues from the DNA which can arise as a result of misincorporation of dUMP residues by DNA polymerase or due to deamination of cytosine. The polypeptide is Uracil-DNA glycosylase (Vibrio parahaemolyticus serotype O3:K6 (strain RIMD 2210633)).